The sequence spans 337 residues: tRNA pseudouridine synthase D (337 aa).

Catalysis depends on aspartate 77, which acts as the Nucleophile. Positions 152–308 (GFPNYFTEQR…ARDFHWEFVE (157 aa)) constitute a TRUD domain.

The protein belongs to the pseudouridine synthase TruD family.

The catalysed reaction is uridine(13) in tRNA = pseudouridine(13) in tRNA. In terms of biological role, responsible for synthesis of pseudouridine from uracil-13 in transfer RNAs. In Mannheimia succiniciproducens (strain KCTC 0769BP / MBEL55E), this protein is tRNA pseudouridine synthase D.